The chain runs to 495 residues: Tubulin epsilon and delta complex protein 1 (495 aa).

A coiled-coil region spans residues 355-387 (GGELDLVVRELQALEEELREAAERRRAAWEAKA). The interval 417–440 (CWERDGGPAQPHGPHRLVRREDGA) is disordered. Positions 452 to 480 (IRTLRSQEACLEAVLRRLQGQCRQELARL) form a coiled coil.

As to quaternary structure, interacts with TEDC2. Found in a complex with TEDC1, TEDC2, TUBE1 and TUBD1.

It is found in the cell projection. The protein localises to the cilium. It localises to the cytoplasm. Its subcellular location is the cytoskeleton. The protein resides in the microtubule organizing center. It is found in the centrosome. The protein localises to the centriole. In terms of biological role, acts as a positive regulator of ciliary hedgehog signaling. Required for centriole stability. May play a role in counteracting perturbation of actin filaments, such as after treatment with the actin depolymerizing microbial metabolite Chivosazole F. This is Tubulin epsilon and delta complex protein 1 from Homo sapiens (Human).